Here is a 1033-residue protein sequence, read N- to C-terminus: Calcium-transporting ATPase 3, plasma membrane-type (1033 aa).

At 1 to 180 (MHSGVNGCCP…FVWEALEDTT (180 aa)) the chain is on the cytoplasmic side. Transmembrane regions (helical) follow at residues 181-201 (LIILSACAIFSLVVGITTEGW) and 204-224 (GAHDGVGIVASILLVVSVTGT). Topologically, residues 225–268 (SNYQQSLQFRDLDKEKRKILVQVTRNGLRQRVLIDDLLPGDAVH) are cytoplasmic. The next 2 membrane-spanning stretches (helical) occupy residues 269–289 (LAVGDQVPADGLFISGFSVLV) and 362–382 (IGKIGLFFAVLTFIVLSQGII). The Cytoplasmic portion of the chain corresponds to 383 to 405 (GQKYLDGLLLSWSGDDVLEILDH). A helical transmembrane segment spans residues 406 to 426 (FAVAVTIVVVAVPEGLPLAVT). Catalysis depends on Asp-461, which acts as the 4-aspartylphosphate intermediate. Residues Asp-762 and Asp-766 each contribute to the Mg(2+) site. Residues 823–843 (FQLTVNVVALLVNFTSACFTG) traverse the membrane as a helical segment. The Cytoplasmic portion of the chain corresponds to 844–846 (DAP). The next 2 helical transmembrane spans lie at 847–867 (LTAVQLLWVNMIMDTLGALAL) and 928–948 (IVLNTIIFNTFVFCQVFNEIS). Residues 949–965 (SREMEDINVLRGMAGNS) lie on the Cytoplasmic side of the membrane. The next 2 helical transmembrane spans lie at 966 to 986 (IFLGVLTGTIFFQFILVQFLG) and 999 to 1019 (WLISILFGFLGMPIAAAIKLI). Topologically, residues 1020–1033 (AVEPHEKADTRRTP) are cytoplasmic.

Belongs to the cation transport ATPase (P-type) (TC 3.A.3) family. Type IIB subfamily.

Its subcellular location is the membrane. The catalysed reaction is Ca(2+)(in) + ATP + H2O = Ca(2+)(out) + ADP + phosphate + H(+). With respect to regulation, activated by calmodulin. Functionally, this magnesium-dependent enzyme catalyzes the hydrolysis of ATP coupled with the translocation of calcium from the cytosol out of the cell, into the endoplasmic reticulum, or into organelles. This chain is Calcium-transporting ATPase 3, plasma membrane-type, found in Oryza sativa subsp. japonica (Rice).